Here is a 479-residue protein sequence, read N- to C-terminus: Ribulose bisphosphate carboxylase large chain 2 (479 aa).

Substrate is bound by residues Asn116 and Thr166. The active-site Proton acceptor is Lys168. Lys170 lines the substrate pocket. Residues Lys194, Asp196, and Glu197 each coordinate Mg(2+). The residue at position 194 (Lys194) is an N6-carboxylysine. His287 serves as the catalytic Proton acceptor. Residues Arg288, His320, and Ser372 each contribute to the substrate site.

Belongs to the RuBisCO large chain family. Type I subfamily. As to quaternary structure, heterohexadecamer of 8 large chains and 8 small chains. It depends on Mg(2+) as a cofactor.

The enzyme catalyses 2 (2R)-3-phosphoglycerate + 2 H(+) = D-ribulose 1,5-bisphosphate + CO2 + H2O. It catalyses the reaction D-ribulose 1,5-bisphosphate + O2 = 2-phosphoglycolate + (2R)-3-phosphoglycerate + 2 H(+). RuBisCO catalyzes two reactions: the carboxylation of D-ribulose 1,5-bisphosphate, the primary event in carbon dioxide fixation, as well as the oxidative fragmentation of the pentose substrate. Both reactions occur simultaneously and in competition at the same active site. The sequence is that of Ribulose bisphosphate carboxylase large chain 2 from Bradyrhizobium sp. (strain BTAi1 / ATCC BAA-1182).